The sequence spans 227 residues: UPF0173 metal-dependent hydrolase BCE_4747 (227 aa).

It belongs to the UPF0173 family.

This Bacillus cereus (strain ATCC 10987 / NRS 248) protein is UPF0173 metal-dependent hydrolase BCE_4747.